A 142-amino-acid polypeptide reads, in one-letter code: Fluoride-specific ion channel FluC 1 (142 aa).

A run of 4 helical transmembrane segments spans residues 17 to 37 (AWVS…GLAL), 42 to 62 (GFPF…GFYA), 80 to 100 (FVMT…LETF), and 109 to 129 (YIAL…VWLG). The Na(+) site is built by Gly87 and Thr90.

It belongs to the fluoride channel Fluc/FEX (TC 1.A.43) family.

It is found in the cell inner membrane. It carries out the reaction fluoride(in) = fluoride(out). Na(+) is not transported, but it plays an essential structural role and its presence is essential for fluoride channel function. Its function is as follows. Fluoride-specific ion channel. Important for reducing fluoride concentration in the cell, thus reducing its toxicity. The protein is Fluoride-specific ion channel FluC 1 of Bradyrhizobium diazoefficiens (strain JCM 10833 / BCRC 13528 / IAM 13628 / NBRC 14792 / USDA 110).